The primary structure comprises 127 residues: Flagellar assembly factor FliW (127 aa).

Belongs to the FliW family. In terms of assembly, interacts with translational regulator CsrA and flagellin(s).

It localises to the cytoplasm. Its function is as follows. Acts as an anti-CsrA protein, binds CsrA and prevents it from repressing translation of its target genes, one of which is flagellin. Binds to flagellin and participates in the assembly of the flagellum. The chain is Flagellar assembly factor FliW from Campylobacter concisus (strain 13826).